The following is a 219-amino-acid chain: Germin-like protein subfamily 2 member 2 (219 aa).

The first 22 residues, 1–22, serve as a signal peptide directing secretion; that stretch reads MMNSRISIIIALSCIMITSIRA. Cysteine 32 and cysteine 47 are joined by a disulfide. Asparagine 52 and asparagine 70 each carry an N-linked (GlcNAc...) asparagine glycan. In terms of domain architecture, Cupin type-1 spans 59–209; the sequence is FFAGISKPAV…TFQVGSKMVD (151 aa). 4 residues coordinate Mn(2+): histidine 109, histidine 111, glutamate 116, and histidine 155.

This sequence belongs to the germin family. Oligomer (believed to be a pentamer but probably hexamer).

It is found in the secreted. The protein localises to the extracellular space. It localises to the apoplast. Functionally, may play a role in plant defense. Probably has no oxalate oxidase activity even if the active site is conserved. The protein is Germin-like protein subfamily 2 member 2 of Arabidopsis thaliana (Mouse-ear cress).